Here is a 167-residue protein sequence, read N- to C-terminus: SsrA-binding protein (167 aa).

Basic and acidic residues predominate over residues 139–158; that stretch reads QNHDKRDAAKDRDWQRDKQR. The disordered stretch occupies residues 139–167; sequence QNHDKRDAAKDRDWQRDKQRVMRRHNRDA.

This sequence belongs to the SmpB family.

The protein localises to the cytoplasm. Required for rescue of stalled ribosomes mediated by trans-translation. Binds to transfer-messenger RNA (tmRNA), required for stable association of tmRNA with ribosomes. tmRNA and SmpB together mimic tRNA shape, replacing the anticodon stem-loop with SmpB. tmRNA is encoded by the ssrA gene; the 2 termini fold to resemble tRNA(Ala) and it encodes a 'tag peptide', a short internal open reading frame. During trans-translation Ala-aminoacylated tmRNA acts like a tRNA, entering the A-site of stalled ribosomes, displacing the stalled mRNA. The ribosome then switches to translate the ORF on the tmRNA; the nascent peptide is terminated with the 'tag peptide' encoded by the tmRNA and targeted for degradation. The ribosome is freed to recommence translation, which seems to be the essential function of trans-translation. This is SsrA-binding protein from Xanthomonas axonopodis pv. citri (strain 306).